Here is a 591-residue protein sequence, read N- to C-terminus: Frizzled-9 (591 aa).

Positions 1–22 (MAVAPLRGALLLWQLLAAGGAA) are cleaved as a signal peptide. Residues 23 to 229 (LEIGRFDPER…EVFWSRRDKD (207 aa)) are Extracellular-facing. The FZ domain occupies 34-155 (RGAAPCQAVE…NDPHALCMEA (122 aa)). 5 cysteine pairs are disulfide-bonded: Cys-39/Cys-100, Cys-47/Cys-93, Cys-84/Cys-122, Cys-111/Cys-152, and Cys-115/Cys-139. The N-linked (GlcNAc...) asparagine glycan is linked to Asn-53. The interval 58–172 (PNLLGHTSQG…PAEPHKGLGM (115 aa)) is required for Wnt-activated receptor activity. Asn-158 carries N-linked (GlcNAc...) asparagine glycosylation. A helical membrane pass occupies residues 230-250 (FALVWMAVWSALCFFSTAFTV). Topologically, residues 251 to 266 (LTFLLEPHRFQYPERP) are cytoplasmic. The chain crosses the membrane as a helical span at residues 267-287 (IIFLSMCYNVYSLAFLIRAVA). The Extracellular portion of the chain corresponds to 288–315 (GAQSVACDQEAGALYVIQEGLENTGCTL). A helical transmembrane segment spans residues 316–336 (VFLLLYYFGMASSLWWVVLTL). The Cytoplasmic portion of the chain corresponds to 337–355 (TWFLAAGKKWGHEAIEAHG). A helical membrane pass occupies residues 356 to 376 (SYFHMAAWGLPALKTIVILTL). Over 377–400 (RKVAGDELTGLCYVASTDAAALTG) the chain is Extracellular. A helical membrane pass occupies residues 401–421 (FVLVPLSGYLVLGSSFLLTGF). Residues 422–447 (VALFHIRKIMKTGGTNTEKLEKLMVK) are Cytoplasmic-facing. Residues 448-468 (IGVFSILYTVPATCVIVCYVY) traverse the membrane as a helical segment. The Extracellular portion of the chain corresponds to 469–508 (ERLNMDFWRLRATEQPCAAAAGPGGRRDCSLPGGSVPTVA). Residues 509–529 (VFMLKIFMSLVVGITSGVWVW) form a helical membrane-spanning segment. The Cytoplasmic portion of the chain corresponds to 530–591 (SSKTFQTWQS…DPSLENPTHL (62 aa)). The short motif at 532-537 (KTFQTW) is the Lys-Thr-X-X-X-Trp motif, mediates interaction with the PDZ domain of Dvl family members element. Residues 554-591 (ACRAPGSYGRGTHCHYKAPTVVLHMTKTDPSLENPTHL) are required for CTNNB1 accumulation and TCF transcription factor activity.

It belongs to the G-protein coupled receptor Fz/Smo family. Post-translationally, ubiquitinated by ZNRF3, leading to its degradation by the proteasome. As to expression, expressed predominantly in adult and fetal brain, testis, eye, skeletal muscle and kidney. Moderately expressed in pancreas, thyroid, adrenal cortex, small intestine and stomach. Detected in fetal liver and kidney. Expressed in neural progenitor cells.

The protein localises to the cell membrane. Functionally, receptor for WNT2 that is coupled to the beta-catenin canonical signaling pathway, which leads to the activation of disheveled proteins, inhibition of GSK-3 kinase, nuclear accumulation of beta-catenin and activation of Wnt target genes. Plays a role in neuromuscular junction (NMJ) assembly by negatively regulating the clustering of acetylcholine receptors (AChR) through the beta-catenin canonical signaling pathway. May play a role in neural progenitor cells (NPCs) viability through the beta-catenin canonical signaling pathway by negatively regulating cell cycle arrest leading to inhibition of neuron apoptotic process. During hippocampal development, regulates neuroblast proliferation and apoptotic cell death. Controls bone formation through non canonical Wnt signaling mediated via ISG15. Positively regulates bone regeneration through non canonical Wnt signaling. This Homo sapiens (Human) protein is Frizzled-9 (FZD9).